Consider the following 201-residue polypeptide: 3-isopropylmalate dehydratase small subunit (201 aa).

The protein belongs to the LeuD family. LeuD type 1 subfamily. As to quaternary structure, heterodimer of LeuC and LeuD.

It carries out the reaction (2R,3S)-3-isopropylmalate = (2S)-2-isopropylmalate. The protein operates within amino-acid biosynthesis; L-leucine biosynthesis; L-leucine from 3-methyl-2-oxobutanoate: step 2/4. Functionally, catalyzes the isomerization between 2-isopropylmalate and 3-isopropylmalate, via the formation of 2-isopropylmaleate. This Glaesserella parasuis serovar 5 (strain SH0165) (Haemophilus parasuis) protein is 3-isopropylmalate dehydratase small subunit.